Reading from the N-terminus, the 229-residue chain is Small ribosomal subunit protein uS3 (229 aa).

The KH type-2 domain maps to 38 to 106; the sequence is IREYIENKLF…KVHINVMEVK (69 aa). The span at 208 to 217 shows a compositional bias: acidic residues; the sequence is PEVDENEETK. A disordered region spans residues 208–229; that stretch reads PEVDENEETKEENKEKSEEKSE. Over residues 218–229 the composition is skewed to basic and acidic residues; the sequence is EENKEKSEEKSE.

This sequence belongs to the universal ribosomal protein uS3 family. As to quaternary structure, part of the 30S ribosomal subunit. Forms a tight complex with proteins S10 and S14.

Functionally, binds the lower part of the 30S subunit head. Binds mRNA in the 70S ribosome, positioning it for translation. The polypeptide is Small ribosomal subunit protein uS3 (Natranaerobius thermophilus (strain ATCC BAA-1301 / DSM 18059 / JW/NM-WN-LF)).